Here is a 208-residue protein sequence, read N- to C-terminus: Uracil phosphoribosyltransferase (208 aa).

Residues Arg-78, Arg-103, and 130–138 (DPMLATGGS) each bind 5-phospho-alpha-D-ribose 1-diphosphate. Residues Ile-193 and 198-200 (GDA) each bind uracil. Asp-199 contacts 5-phospho-alpha-D-ribose 1-diphosphate.

This sequence belongs to the UPRTase family. It depends on Mg(2+) as a cofactor.

The enzyme catalyses UMP + diphosphate = 5-phospho-alpha-D-ribose 1-diphosphate + uracil. Its pathway is pyrimidine metabolism; UMP biosynthesis via salvage pathway; UMP from uracil: step 1/1. Its activity is regulated as follows. Allosterically activated by GTP. Catalyzes the conversion of uracil and 5-phospho-alpha-D-ribose 1-diphosphate (PRPP) to UMP and diphosphate. This is Uracil phosphoribosyltransferase from Roseiflexus castenholzii (strain DSM 13941 / HLO8).